A 307-amino-acid chain; its full sequence is Transcription initiation factor IIB 2 (307 aa).

The segment at 7 to 38 (TPKRCPECNSEHLIRDYEHGELICADCGAVIE) adopts a TFIIB-type zinc-finger fold. Zn(2+) contacts are provided by Cys-11, Cys-14, Cys-30, and Cys-33. 2 tandem repeats follow at residues 124-207 (QLLN…AKEL) and 218-299 (SYIS…EISK).

Belongs to the TFIIB family.

Stabilizes TBP binding to an archaeal box-A promoter. Also responsible for recruiting RNA polymerase II to the pre-initiation complex (DNA-TBP-TFIIB). The protein is Transcription initiation factor IIB 2 of Thermoplasma acidophilum (strain ATCC 25905 / DSM 1728 / JCM 9062 / NBRC 15155 / AMRC-C165).